Consider the following 4114-residue polypeptide: MSVSKNAHAPFPDVTGLRTSGPDFSRVGPQCKLLRVQQSLHLDARAASSFSGQDLHLALLSAWCVILFHYGSHEATNIEVLHTSQHGHETLVELDFAEQRELVPFTPSQLAAFVHQARQQQLPAKDLDHGYAAFYQPSHTNEPSPHFQQLQLSSRPDISLALSYHLQGSAQLVLEMKAAPSVHSHQSAQLQLRQVAALLESYHSDTQQHALSVERFDWKLRASDNPNYQHLPDPNHIQDRHADRLETEFEYFAATTPDALALDFRFDLQDLKSTKWSYAEMNQRAEKVKHLLWSHGVGSASSDPQADHIVALYLEKSPETYLSFIGVLKAGAAWCPIDTDWPASRRQALLAKSNAKIVLTHDDKISEQLRHDLESQLVKDKGEITAIRLDQLDAELSQVQVVPPANANRSIQQLAYMIWTSGTTGLPKGVGIQHLAIIQAMRALRIYIPYGKDKIGTDQIRYLQYSAYNFDLSIMDCFYTWGLGGTICSCPRGVLLQDLVEVGNSLQPTHTLLTPAVMAMTERHRVPSLKVVISGGEKLSQVVADEWSKDCCLLNLYGPAEATLIAMNRRVPFGDRVKAPNIGVALPTVSCHALDKYDQIVIKGAVGELVLGGPQLARGYVGDPVKTADKFFPHPQLGRVYRTGDLVRQLDNQEFEYLGRIDDQVKINGIRIELLEINAAIKNSHDKIKDSETMAFSKKDNESEQQIINFSALPGGEPGQLLRTDQDAIAVARELQANAKDSLPSYMVPNLFVILSHFPRTSSAKIDRVALKNVLASFDQLDWENKLANEGDDDQVDPATAQAEACLRKWLAKLCNVDASKIGRKTPFTSVGLDSIRAMMFSKRVSEEGFAVSVLDVARFPTLKSLGEHLQSSGASSEERAKRAASFLADFDAAFRPVVSSWVKQRKADASAIQSILPCTPLQEGMLAESQRDSSSYRIQRQYRLASDCDQARLSKALIETVAHFDSLRTSFADVGSLDVGLHQREWPFQPHFLQIVWKSFTPLIEQLDVDDGSDAEQAILSAAKTKLDLDPFGTSPPVAFLFVKQALSRSLVVVAHHSTYDARSLGIFEDHVEAVYNRQKPPTSLQFSTALAQILPIDQTEAQRHADVWQKALSNYPRGEYASFPTLSLTRPSEADADQASLHQSRYLEANINWAKIESACRELGVSARPLVQTAWALVLSAFTESQHLILGDSVSGRTLSAELDLAYGPVLSTVPVPFMLRPEQKLGNLIKQMDDFQTSIMEAQHTDLGAIRRMLQVPPRESLFHSVFVLEPAPEQPEDIDSSQFRLSKMADLGVATEHVLGVEVLPASDGSVKLGLSWQKNIISEGFGGLILEQFDRSLTALCSSLDADVGSLLYCHPRSDQQASSFYSVTKPVSKQKCSSATFTGVASSLNKQAISDNSNAVEIYQDMADSPSSRKPAATMSYPELEQASNGVANLFRHLPRNSVVGVCLERGLESYIVPLAILKAGHAYLPLDATLPLDRKKELVKDSGAALIVASSKFTDFDSLTGVEMLGTDSRQFKDAVKDGKATVSVESRSDDVAFIIYTSGSTGKPKGCLLTQANLAAAVEGFYYNYEKEAPGSFESRARFLARSAEAFDVHLLEIFLSLRVGATIVTGPRALIHDDIAKTMSTLEVTHACVVPSLFFSKGKRIEPSVVPSLRVLIIGGEALTQDLCQIWGSEGSERPVVLNAYGPSEATIGNSVARVSKKSRPSNIGAPFPGTQYLVLKDVNGQLVPTLRGEPGELYIGGEQVAKGYLNRPDSSSFITYQGQQIYRTGDMVRLHPSDEAEYLGRIDGSQVKVRGARLELAEVDAALSASLNENLGTVGTAVTIHADHPKIEGAARLVSFFAQDCVRTKAQDSVDPGALLVQAPEAVKQSAELRRSVRARLPQYMVPSLVLALTYLPISPLSGKADRRLLKELYHSIDPSKLSTLSDKNESRQRELTDSEQTVAELVRSSVRLSSDVHLMHDLDLIMAGLDSLTVVTLANKLRKHGYDATVSSIMNEPTIEAIAGRRIDKLSSNETSDVEWKQTVSQLTDKVRSLPQYRGTQIETALPCVPIQVALVSQAVSDDRSTPRYITTISIDLSSNEFSADRIRNAWMTALSRHEIYRTVFAEVDRTLVQVVLSAESLTSNWSATSEPIPSPDSLADYHASTAKDIVANISSVPALRLKLWQGENGAPTLTLTCSHAIYDGDSIRMLLKEASDCLVTKSKVVPALPFQEAARCIVGDAEDEEAKQFWTTTLADFLPTTVPNLTGVRPEHNVSRGEELTIASHLSFTQLEKAARAAKVTIQSILVAAFAHLLGLYAGESDVTLGLVLSGRSIPVDGVESIHGPCVTTVPLRLTDARSNASSDLCKRAHQAVNAILPHQHVSLPQLMRWLDLSKAPFEALFSYLGQSERSSEKPYFSERASQMERDYSLALEVSAVGDAVNLHLAFDTRSMPAEQAKRMLCQYDGFLTVFTGTKRVDDDGKHLSILNKSCYVPTSANETIVARFTEHVKANPDAPAIVFASSMQEPPKVTSYAELDSLSTKIAFHLVHAAGPFVGVHLNKEGPELYATILAIWKAGKAYLPLDPSLPVERLSYMIESVGDCPVVASHSTKENLASFRCKVLDLKELVKPRSGAHELPSQNLDALCYLLFTSGSTGKPKAVQINQRALAGALYSWERILPFTRTSRFLQLASIGFDVCLIEMCMPLSLGFSIGTAPKQELLEDLTHSIKHLGITIADLPAALAGAVHPEDVRLEWLMSGGDVIDSRVVDEWNHAKRLLINAWGPTEATIGNTLGQVKRGATRNLIGGVYPSSSMFVLDENSTRILPSGAIGELAVGGPQLADCYYGREELTAEKFILLEDGTRVYRTGDLGRFLVDDTVECLGRIGSDRQVKVNGQRMELDEVCSVISAQAGVYDADVQYLKHPSMGSKQLVAFVAAAETQAKQGDMDVRDDDKAIDLCIRLEQEAAKRLATYMVPTHWIVMKHGLPLTHNNKTDHKALAAFYGRMDATLLRSLGAKREGAISSHAWTQSELKLRALVSDFCNVPQDQLARNTSFHRLGIDSISAIRLVKQLRTSGFTFSVADVLSTPNIAALADKQMQSSACSSDHAQPNEGLNEWIGQISSVAENEAWKWSSKDSLVSVLPCTPLQSGMIAQSLASAGGLYFHHHAFELQSTEKQHVVAAWRKLVERLDILRTTFHPVDGLHPWTQAVHSEVQPRIVQHSGSFQSCGLDAIDGQPSFQDEQAFRTPPFALHLWSQEGKLVVLISIHHALYDGSSLPQLLEDFEALITGNQAKLTSRLPFYKLVPSLLSQDEDVQHWVNALHAFQPTLLCKRSNKPSGAAVLLEKRLALTSQELESRCRAIGVSPQVLCNLTFGKLLAIESQTRDVCFGQLFGLLDLMPEADTCVGPAFNTTATRIRFQELDAPVSKLATTLQQANDAGRPHRRAALRDVQAKLGRGQLFDALFDYQRSYDQEDSKLRQIELQSDGTERAQYTLNVAFVQGPSQMSIVAKADGNRYDQKALEGVVYRLEHLLEHLSIRVEEPISVLPDVFGETAFPLHLAQVSVANGTSTSKASAQNSANQALSQDGSKLASIISQIAGIDEMELHGETRLSQLGLDSISAIRIASQARKAGLNLRMGEIVAGETINAILSARSQTNATKSSDHVNRNGRGNGHARVSLETAKRVAARLAIDFEQVERVLPVLPGQKLWLATWAQSQGGGGFSFAYRLAGAEADKVKETWQKLRQLQPILRTAFLVHHDGGASQVVLKADSVSAGSGFAEVQVERDAELTAKDVVGRRAAQGWPDLTSPPVELTLVGEIVVFSLHHVLYDAFSIEFLARDFGSLYNAGELVSSNQWPEVVEHIVEEQQRTRGDAQEYWCRALAPGSSGLLADRPGSTGEAWHVQHNAISLSSAVDVRIRKAGLTLAGVLLAAWSTLLSERMHDASPVFGLYQLGRSSSFESIDKVHGPLLNCLPIQLRGGSLLDKARAAVSELRLRAKFEQTDLQDAHRWAGLSQHQACYNTFVNILFGDQLDQHLEMHQLDLGHPLDYSHHSQHSTHDRTPPSTPHVALPWQPDVNLDVVLKNHAVDIAIKANTSVVAQADLHTLVNRLVQLVHATLELL.

4 consecutive Carrier domains span residues 797 to 874, 1947 to 2021, 3020 to 3093, and 3574 to 3650; these read DPAT…QSSG, TDSE…IDKL, TQSE…MQSS, and QALS…SQTN. O-(pantetheine 4'-phosphoryl)serine is present on residues Ser835, Ser1982, Ser3054, and Ser3611. A disordered region spans residues 4040-4061; it reads LDYSHHSQHSTHDRTPPSTPHV. Basic and acidic residues predominate over residues 4041 to 4054; sequence DYSHHSQHSTHDRT.

The protein belongs to the ATP-dependent AMP-binding enzyme family. The cofactor is pantetheine 4'-phosphate.

It functions in the pathway siderophore biosynthesis; ferrichrome biosynthesis. In terms of biological role, multidomain peptide synthetase involved in ferrichrome biosynthesis. The protein is Ferrichrome siderophore peptide synthetase (SID2) of Mycosarcoma maydis (Corn smut fungus).